The primary structure comprises 707 residues: SEC14-like protein 5 (707 aa).

Residues 3-175 (QKYQSPVRVY…YLNELISQGI (173 aa)) form the PRELI/MSF1 domain. The segment covering 201–211 (RSNQAEQTASQ) has biased composition (polar residues). A disordered region spans residues 201–232 (RSNQAEQTASQGPCKADAGSHSLAAEPSTPDT). The CRAL-TRIO domain maps to 315-491 (PPRVLEEYYA…FLGGECVCNI (177 aa)). In terms of domain architecture, GOLD spans 518 to 667 (TETIYQSSCV…KCKLMYYFEV (150 aa)). Positions 686–695 (FSQLSGVTNT) are enriched in polar residues. The disordered stretch occupies residues 686 to 707 (FSQLSGVTNTSSKSHSSSLISR). Residues 696-707 (SSKSHSSSLISR) are compositionally biased toward low complexity.

This chain is SEC14-like protein 5 (sec14l1), found in Xenopus tropicalis (Western clawed frog).